The primary structure comprises 355 residues: Galectin-9 (355 aa).

2 consecutive Galectin domains span residues 17–148 and 227–355; these read FSGT…ISFQ and FITT…HVQT. Residues Asn48, His61, Arg65, Asn75, 82 to 88, His267, Arg271, Thr281, and 287 to 293 each bind a beta-D-galactoside; these read WGPEERK and WGSEERS.

As to quaternary structure, monomer. As to expression, peripheral blood leukocytes and lymphatic tissues. Expressed in lung, liver, breast and kidney with higher levels in tumor endothelial cells than normal endothelium (at protein level). Expressed in trophoblast cells in decidua and placenta in pregnancy (at protein level). Isoform 2 is the most abundant isoform expressed in endothelial cells. Upon endothelial cell activation isoform 2 expression decreases while expression of isoform 3 and isoform 5 increases. Isoform 4 decreases in pathological pregnancy.

The protein localises to the cytoplasm. It localises to the nucleus. It is found in the secreted. In terms of biological role, binds galactosides. Has high affinity for the Forssman pentasaccharide. Ligand for HAVCR2/TIM3. Binding to HAVCR2 induces T-helper type 1 lymphocyte (Th1) death. Also stimulates bactericidal activity in infected macrophages by causing macrophage activation and IL1B secretion which restricts intracellular bacterial growth. Ligand for P4HB; the interaction retains P4HB at the cell surface of Th2 T-helper cells, increasing disulfide reductase activity at the plasma membrane, altering the plasma membrane redox state and enhancing cell migration. Ligand for CD44; the interaction enhances binding of SMAD3 to the FOXP3 promoter, leading to up-regulation of FOXP3 expression and increased induced regulatory T (iTreg) cell stability and suppressive function. Promotes ability of mesenchymal stromal cells to suppress T-cell proliferation. Expands regulatory T-cells and induces cytotoxic T-cell apoptosis following virus infection. Activates ERK1/2 phosphorylation inducing cytokine (IL-6, IL-8, IL-12) and chemokine (CCL2) production in mast and dendritic cells. Inhibits degranulation and induces apoptosis of mast cells. Induces maturation and migration of dendritic cells. Inhibits natural killer (NK) cell function. Can transform NK cell phenotype from peripheral to decidual during pregnancy. Astrocyte derived galectin-9 enhances microglial TNF production. May play a role in thymocyte-epithelial interactions relevant to the biology of the thymus. May provide the molecular basis for urate flux across cell membranes, allowing urate that is formed during purine metabolism to efflux from cells and serving as an electrogenic transporter that plays an important role in renal and gastrointestinal urate excretion. Highly selective to the anion urate. Acts as an eosinophil chemoattractant. It also inhibits angiogenesis. Suppresses IFNG production by natural killer cells. This is Galectin-9 (LGALS9) from Homo sapiens (Human).